A 109-amino-acid chain; its full sequence is UPF0060 membrane protein ABO_1373 (109 aa).

4 helical membrane-spanning segments follow: residues 1 to 21, 33 to 53, 63 to 83, and 87 to 107; these read MLALYTLGLFILTAVTEIVGC, PGWVLLPAAASLAMFAWLLSL, AAYGGVYVFVALLWLWGVEGV, and PWDFVGVAVALAGMGIIMFAP.

Belongs to the UPF0060 family.

The protein localises to the cell inner membrane. In Alcanivorax borkumensis (strain ATCC 700651 / DSM 11573 / NCIMB 13689 / SK2), this protein is UPF0060 membrane protein ABO_1373.